The primary structure comprises 768 residues: Cullin-3-B (768 aa).

Residues 677-698 (VAAKQGESDPERKETRQKVDDD) are disordered. Residues 682-698 (GESDPERKETRQKVDDD) are compositionally biased toward basic and acidic residues. Residues 698–760 (DRKHEIEAAI…REYLARTPED (63 aa)) form the Cullin neddylation domain. Residue lysine 712 forms a Glycyl lysine isopeptide (Lys-Gly) (interchain with G-Cter in NEDD8) linkage.

Belongs to the cullin family. Component of multiple BCR (BTB-CUL3-RBX1) E3 ubiquitin-protein ligase complexes formed of cul3, rbx1 and a variable BTB domain-containing protein acting as both, adapter to cullin and substrate recognition subunit. Interacts with btbd6. In terms of processing, neddylated. Attachment of NEDD8 is required for the E3 ubiquitin-protein ligase activity of the SCF-like complex.

It is found in the nucleus. It functions in the pathway protein modification; protein ubiquitination. Probable core component of cullin-based SCF-like E3 ubiquitin-protein ligase complexes which mediate the ubiquitination and subsequent proteasomal degradation of target proteins. The E3 ubiquitin-protein ligase activity of the complex is dependent on the neddylation of the cullin subunit. Involved in ER-Golgi transport by regulating the size of COPII coats, thereby playing a key role in collagen export, which is required for embryonic stem (ES) cells division. May play a role in the regulation of mittotic entry via ubiquitination of aurka. The chain is Cullin-3-B (cul3b) from Xenopus laevis (African clawed frog).